The sequence spans 306 residues: ADP,ATP carrier protein ER-ANT1 (306 aa).

Solcar repeat units follow at residues 8 to 101, 113 to 205, and 213 to 299; these read ERFS…FKNL, KWFA…IKPI, and GNFL…LHQI. 5 helical membrane passes run 10–37, 78–102, 111–131, 181–202, and 216–236; these read FSAD…VKLL, QANV…KNLL, YLKW…TTSL, FGVS…YDTI, and LASF…AYPF. ADP is bound by residues Arg-83 and Lys-95. Residue Arg-240 coordinates ADP. The tract at residues 240 to 245 is important for transport activity; the sequence is RRRMML. The Nucleotide carrier signature motif motif lies at 240–245; sequence RRRMML. The helical transmembrane segment at 276–296 threads the bilayer; that stretch reads VTANMLLGVAGAGVLAGYDQL.

Belongs to the mitochondrial carrier (TC 2.A.29) family.

It localises to the endoplasmic reticulum membrane. It carries out the reaction ADP(in) + ATP(out) = ADP(out) + ATP(in). Functionally, ADP:ATP antiporter that catalyzes the exchange of ADP and ATP across the endoplasmic reticulum membrane. The polypeptide is ADP,ATP carrier protein ER-ANT1 (ER-ANT1) (Arabidopsis thaliana (Mouse-ear cress)).